The following is a 211-amino-acid chain: ATP-dependent dethiobiotin synthetase BioD 2 (211 aa).

13–18 (DIGKTI) provides a ligand contact to ATP. T17 serves as a coordination point for Mg(2+). Residue K38 is part of the active site. T42 serves as a coordination point for substrate. Residues D50, 115–118 (EGAG), and 175–176 (NT) contribute to the ATP site. Positions 50 and 115 each coordinate Mg(2+).

This sequence belongs to the dethiobiotin synthetase family. In terms of assembly, homodimer. Mg(2+) is required as a cofactor.

Its subcellular location is the cytoplasm. It carries out the reaction (7R,8S)-7,8-diammoniononanoate + CO2 + ATP = (4R,5S)-dethiobiotin + ADP + phosphate + 3 H(+). It functions in the pathway cofactor biosynthesis; biotin biosynthesis; biotin from 7,8-diaminononanoate: step 1/2. Functionally, catalyzes a mechanistically unusual reaction, the ATP-dependent insertion of CO2 between the N7 and N8 nitrogen atoms of 7,8-diaminopelargonic acid (DAPA, also called 7,8-diammoniononanoate) to form a ureido ring. This is ATP-dependent dethiobiotin synthetase BioD 2 from Haemophilus ducreyi (strain 35000HP / ATCC 700724).